Here is a 381-residue protein sequence, read N- to C-terminus: Putative F-box protein At4g17200 (381 aa).

Residues Met1–Ala47 form the F-box domain.

This is Putative F-box protein At4g17200 from Arabidopsis thaliana (Mouse-ear cress).